A 341-amino-acid polypeptide reads, in one-letter code: D-erythrose-4-phosphate dehydrogenase (341 aa).

NAD(+) is bound at residue 14–15 (RI). Residues 156 to 158 (SCT), R202, 215 to 216 (TR), and R238 contribute to the substrate site. The active-site Nucleophile is the C157. N320 contacts NAD(+).

Belongs to the glyceraldehyde-3-phosphate dehydrogenase family. Epd subfamily. In terms of assembly, homotetramer.

It localises to the cytoplasm. It carries out the reaction D-erythrose 4-phosphate + NAD(+) + H2O = 4-phospho-D-erythronate + NADH + 2 H(+). It functions in the pathway cofactor biosynthesis; pyridoxine 5'-phosphate biosynthesis; pyridoxine 5'-phosphate from D-erythrose 4-phosphate: step 1/5. In terms of biological role, catalyzes the NAD-dependent conversion of D-erythrose 4-phosphate to 4-phosphoerythronate. The protein is D-erythrose-4-phosphate dehydrogenase of Idiomarina loihiensis (strain ATCC BAA-735 / DSM 15497 / L2-TR).